Here is a 236-residue protein sequence, read N- to C-terminus: Dual specificity protein phosphatase 15 (236 aa).

Gly-2 is lipidated: N-myristoyl glycine. The region spanning 4–144 (GMTKVLPGLY…LEEFGWANSQ (141 aa)) is the Tyrosine-protein phosphatase domain. Cys-88 functions as the Phosphocysteine intermediate in the catalytic mechanism. The tract at residues 178–213 (GPGTSAPSATTASSAASEGTLQRLVPRSPRESHRPL) is disordered. The segment covering 181 to 194 (TSAPSATTASSAAS) has biased composition (low complexity).

This sequence belongs to the protein-tyrosine phosphatase family. Non-receptor class dual specificity subfamily.

The protein localises to the cell membrane. It catalyses the reaction O-phospho-L-tyrosyl-[protein] + H2O = L-tyrosyl-[protein] + phosphate. The catalysed reaction is O-phospho-L-seryl-[protein] + H2O = L-seryl-[protein] + phosphate. The enzyme catalyses O-phospho-L-threonyl-[protein] + H2O = L-threonyl-[protein] + phosphate. Functionally, may play a role in the regulation of oligodendrocyte differentiation. May play a role in the regulation of myelin formation. Involved in the regulation of Erk1/2 phosphorylation in Schwann cells; the signaling may be linked to the regulation of myelination. May dephosphorylate MAPK13, ATF2, ERBB3, PDGFRB and SNX6. This is Dual specificity protein phosphatase 15 (Dusp15) from Rattus norvegicus (Rat).